We begin with the raw amino-acid sequence, 121 residues long: Ribosome-binding factor A (121 aa).

Belongs to the RbfA family. As to quaternary structure, monomer. Binds 30S ribosomal subunits, but not 50S ribosomal subunits or 70S ribosomes.

Its subcellular location is the cytoplasm. Functionally, one of several proteins that assist in the late maturation steps of the functional core of the 30S ribosomal subunit. Associates with free 30S ribosomal subunits (but not with 30S subunits that are part of 70S ribosomes or polysomes). Required for efficient processing of 16S rRNA. May interact with the 5'-terminal helix region of 16S rRNA. The sequence is that of Ribosome-binding factor A from Paraburkholderia xenovorans (strain LB400).